The primary structure comprises 1781 residues: Signal-induced proliferation-associated 1-like protein 3 (1781 aa).

2 disordered regions span residues 45-166 (SMSQ…FLPL) and 239-332 (TELL…EASR). The span at 54–73 (PATATATATATTRPSPTTPA) shows a compositional bias: low complexity. Over residues 87 to 97 (PPKREALREHS) the composition is skewed to basic and acidic residues. At Ser-100 the chain carries Phosphoserine. Residues 118 to 135 (RSIQNGQPPTSTPASSGS) are compositionally biased toward polar residues. The segment covering 137–146 (AFHRLSRRRS) has biased composition (basic residues). Ser-146 is subject to Phosphoserine. The residue at position 401 (Ser-401) is a Phosphoserine. In terms of domain architecture, Rap-GAP spans 611-828 (LLKLDEQGLC…RTRQEYLKDL (218 aa)). The PDZ domain occupies 966–1042 (DMTLRRNGLG…VKVVIIPPFE (77 aa)). Disordered stretches follow at residues 1046-1112 (PRRG…SLSR), 1124-1221 (ESQP…QKPE), 1236-1565 (AGSS…GLEP), and 1583-1636 (TLPA…RLDP). Polar residues-rich tracts occupy residues 1080 to 1111 (APWQ…QSLS) and 1157 to 1166 (PSGSFSTPGS). The segment covering 1196 to 1210 (DGTSSGDSSSGGLTS) has biased composition (low complexity). Residues 1245–1261 (SRQDAAGKDSPNRHSKG) are compositionally biased toward basic and acidic residues. Positions 1266-1281 (SSHSSSNTLSSNASSS) are enriched in low complexity. Residues 1304-1322 (GGSSDSGIDTTLYTSSPSC) are compositionally biased toward polar residues. Ser-1364 is subject to Phosphoserine. Thr-1387 is modified (phosphothreonine). Residues 1425 to 1441 (RPSQLAQPSPFQLSASV) are compositionally biased toward polar residues. Lys-1448 carries the post-translational modification N6-acetyllysine. Residues 1509 to 1518 (TIEDDLKKLI) show a composition bias toward basic and acidic residues. The span at 1532–1547 (GQSPQKGLQRTLSDES) shows a compositional bias: polar residues. 2 positions are modified to phosphoserine: Ser-1544 and Ser-1547. The span at 1599–1609 (PGATPAAGSGF) shows a compositional bias: low complexity. 2 positions are modified to phosphoserine: Ser-1619 and Ser-1622. Basic and acidic residues predominate over residues 1625–1635 (DGRDRPLRRLD). Phosphoserine is present on Ser-1677. Residues 1685–1712 (SPVHSHLSLERGPPTPRTTPTMSEEPPL) form a disordered region. Phosphothreonine occurs at positions 1699 and 1703. Positions 1720–1774 (QLEVMLKQLHTDLQKEKQDKVVLQSEVASLRQNNQRLQEESQAASEQLRKFAEIF) form a coiled coil.

It is found in the apical cell membrane. Functionally, plays a critical role in epithelial cell morphogenesis, polarity, adhesion and cytoskeletal organization in the lens. The polypeptide is Signal-induced proliferation-associated 1-like protein 3 (SIPA1L3) (Homo sapiens (Human)).